The primary structure comprises 177 residues: Nucleoside triphosphate/diphosphate phosphatase (177 aa).

Arg23 (proton donor) is an active-site residue. The Mg(2+) site is built by Asn87, Asp103, Asp105, Asp107, Asp120, and Glu123.

This sequence belongs to the Ntdp family. The cofactor is Mg(2+).

It carries out the reaction a ribonucleoside 5'-triphosphate + H2O = a ribonucleoside 5'-diphosphate + phosphate + H(+). The enzyme catalyses a ribonucleoside 5'-diphosphate + H2O = a ribonucleoside 5'-phosphate + phosphate + H(+). In terms of biological role, has nucleoside phosphatase activity towards nucleoside triphosphates and nucleoside diphosphates. The chain is Nucleoside triphosphate/diphosphate phosphatase from Streptococcus uberis (strain ATCC BAA-854 / 0140J).